The sequence spans 330 residues: Polyprenol dehydrogenase (330 aa).

NAD(+) contacts are provided by Ile-55, Tyr-208, Lys-212, and Thr-245. The Proton acceptor role is filled by Tyr-208.

Belongs to the short-chain dehydrogenases/reductases (SDR) family. In terms of tissue distribution, widely expressed. Highly expressed in the pancreas.

It localises to the lipid droplet. It is found in the secreted. It carries out the reaction a di-trans,poly-cis-polyprenol + NAD(+) = a di-trans,poly-cis-polyprenal + NADH + H(+). It catalyses the reaction a di-trans,poly-cis-polyprenol + NADP(+) = a di-trans,poly-cis-polyprenal + NADPH + H(+). The enzyme catalyses a di-trans,poly-cis-dolichol + NADP(+) = a di-trans,poly-cis-dolichal + NADPH + H(+). The catalysed reaction is a di-trans,poly-cis-dolichol + NAD(+) = a di-trans,poly-cis-dolichal + NADH + H(+). It functions in the pathway protein modification; protein glycosylation. Its function is as follows. Oxidoreductase that plays a key role in early steps of protein N-linked glycosylation by mediating two non-consecutive steps in dolichol biosynthesis. Acts both as a NAD(+)-dependent dehydrogenase and as a NADPH-dependent reductase during the conversion of polyprenol into dolichol. First catalyzes the NAD(+)-dependent dehydrogenation of polyprenol into polyprenal; polyprenal is then reduced into dolichal by SRD5A3. It then catalyzes the NADPH-dependent reduction of dolichal into dolichol. May also acts as a positive regulator of starvation-induced autophagy. The sequence is that of Polyprenol dehydrogenase from Homo sapiens (Human).